The primary structure comprises 142 residues: Ribosome-binding factor A (142 aa).

Positions 119-142 (EAKQKQHGVETDAEQGDTKEEGDK) are disordered.

Belongs to the RbfA family. In terms of assembly, monomer. Binds 30S ribosomal subunits, but not 50S ribosomal subunits or 70S ribosomes.

Its subcellular location is the cytoplasm. Its function is as follows. One of several proteins that assist in the late maturation steps of the functional core of the 30S ribosomal subunit. Associates with free 30S ribosomal subunits (but not with 30S subunits that are part of 70S ribosomes or polysomes). Required for efficient processing of 16S rRNA. May interact with the 5'-terminal helix region of 16S rRNA. In Shewanella pealeana (strain ATCC 700345 / ANG-SQ1), this protein is Ribosome-binding factor A.